The following is a 332-amino-acid chain: DNA-directed RNA polymerase subunit alpha (332 aa).

Residues 1 to 226 (MLIAQRPTLT…ELFGLARELN (226 aa)) form an alpha N-terminal domain (alpha-NTD) region. The alpha C-terminal domain (alpha-CTD) stretch occupies residues 243-332 (LSSELSMPIE…GYDEDESTTI (90 aa)).

This sequence belongs to the RNA polymerase alpha chain family. As to quaternary structure, homodimer. The RNAP catalytic core consists of 2 alpha, 1 beta, 1 beta' and 1 omega subunit. When a sigma factor is associated with the core the holoenzyme is formed, which can initiate transcription.

The enzyme catalyses RNA(n) + a ribonucleoside 5'-triphosphate = RNA(n+1) + diphosphate. In terms of biological role, DNA-dependent RNA polymerase catalyzes the transcription of DNA into RNA using the four ribonucleoside triphosphates as substrates. This Leifsonia xyli subsp. xyli (strain CTCB07) protein is DNA-directed RNA polymerase subunit alpha.